We begin with the raw amino-acid sequence, 327 residues long: Methionyl-tRNA formyltransferase (327 aa).

Residue 121–124 (SLLP) coordinates (6S)-5,6,7,8-tetrahydrofolate.

It belongs to the Fmt family.

It carries out the reaction L-methionyl-tRNA(fMet) + (6R)-10-formyltetrahydrofolate = N-formyl-L-methionyl-tRNA(fMet) + (6S)-5,6,7,8-tetrahydrofolate + H(+). Attaches a formyl group to the free amino group of methionyl-tRNA(fMet). The formyl group appears to play a dual role in the initiator identity of N-formylmethionyl-tRNA by promoting its recognition by IF2 and preventing the misappropriation of this tRNA by the elongation apparatus. The polypeptide is Methionyl-tRNA formyltransferase (Burkholderia pseudomallei (strain 668)).